The sequence spans 507 residues: MMLGGGGGCGAGGTWLGFLVFLAVSLRNHSTCEDIDAEDRLMVDLFRGYNSLVQPVRNRSELPMIVKIGMQLVLLINVDEKEQVMHTNVWLTMKWDDFQLKWDPRDYANITQIRVAPEKVWLPDIVLFNNADGNYEVSFMCNVLILSTGTVLWVPPAIYKSSCIIDVEFFPFDDQLCSLTFGSWTYNRDEIKLDFLTSDRVDFSEYSTSSIWDMMDGPAVLTSDRSRIEFQIRIRRKTLFYTVVLILPTVLMAFLNVTVFYLPTASGEKMGLTMNVLLSIVVFLLLVSKILPPTSSSIPLVAKYLLLTFVLNIITIMVTTIICNIYFRSPITHRLPPWVRKVFLDILPLLMCMQRPHRKNVIQRSHRRLLETGPSVEENPMRSGEHHPLCRHTHNQDSCRRVRIQSDELDDELSPEAQRAIDAIEFITENRRDEEITKQFRDDWKFIASVVDRFLLYGFFGATVGGTIGIIFTAPSVFETFDENATLVKLKQLYDMGLANDTVLGIF.

Residues 1–31 (MMLGGGGGCGAGGTWLGFLVFLAVSLRNHST) form the signal peptide. Residues Asn-28, Asn-58, and Asn-109 are each glycosylated (N-linked (GlcNAc...) asparagine). Over 32–138 (CEDIDAEDRL…NNADGNYEVS (107 aa)) the chain is Extracellular. The helical transmembrane segment at 139-159 (FMCNVLILSTGTVLWVPPAIY) threads the bilayer. An intrachain disulfide couples Cys-163 to Cys-177. 3 helical membrane-spanning segments follow: residues 243 to 263 (VVLI…FYLP), 271 to 291 (GLTM…SKIL), and 305 to 325 (LLLT…ICNI). Residues 373 to 392 (GPSVEENPMRSGEHHPLCRH) are disordered. Residues 379–392 (NPMRSGEHHPLCRH) are compositionally biased toward basic and acidic residues. The chain crosses the membrane as a helical span at residues 454 to 474 (FLLYGFFGATVGGTIGIIFTA).

The protein belongs to the ligand-gated ion channel (TC 1.A.9) family. Acetylcholine receptor (TC 1.A.9.1) subfamily. In terms of assembly, interacts with unc-29. Component of nicotinic acetylcholine receptor composed of 2 non-alpha subunits lev-1 and unc-29, and 3 alpha subunits unc-38, unc-63 and lev-8.

It localises to the postsynaptic cell membrane. The protein resides in the cell membrane. Functionally, non-alpha subunit of nicotinic acetylcholine receptor (nAChR). Involved in nAChR sensitivity to nicotine. The sequence is that of Acetylcholine receptor subunit beta-type lev-1 (lev-1) from Caenorhabditis elegans.